The following is a 762-amino-acid chain: Cellulose synthase-like protein H2 (762 aa).

The segment covering 1 to 15 (MAVVAAAAATGSTTR) has biased composition (low complexity). Positions 1–39 (MAVVAAAAATGSTTRSGGGGGEGTRSGRKKPPPPPLQER) are disordered. 2 consecutive transmembrane segments (helical) span residues 47 to 67 (AWAW…LLAL) and 81 to 101 (GVWR…ALNV). Active-site residues include Asp-180 and Asp-470. Transmembrane regions (helical) follow at residues 541–561 (LAYL…CYGL), 582–602 (FSVP…EYMA), 619–639 (IISV…SLGL), 673–693 (LPVF…VTVG), 708–728 (APGI…FPFV), and 739–759 (GIPW…VTFC).

Belongs to the glycosyltransferase 2 family. Plant cellulose synthase-like H subfamily.

Its subcellular location is the golgi apparatus membrane. Thought to be a Golgi-localized beta-glycan synthase that polymerize the backbones of noncellulosic polysaccharides (hemicelluloses) of plant cell wall. This Oryza sativa subsp. japonica (Rice) protein is Cellulose synthase-like protein H2 (CSLH2).